Consider the following 77-residue polypeptide: Large ribosomal subunit protein uL24 (77 aa).

This sequence belongs to the universal ribosomal protein uL24 family. In terms of assembly, part of the 50S ribosomal subunit.

Its function is as follows. One of two assembly initiator proteins, it binds directly to the 5'-end of the 23S rRNA, where it nucleates assembly of the 50S subunit. Functionally, one of the proteins that surrounds the polypeptide exit tunnel on the outside of the subunit. The chain is Large ribosomal subunit protein uL24 from Sulfurovum sp. (strain NBC37-1).